The following is a 750-amino-acid chain: Polyribonucleotide nucleotidyltransferase (750 aa).

Mg(2+) is bound by residues D523 and D529. Residues 589–648 form the KH domain; sequence PRVTSISIPVDKIGEVIGPKGKMINSITEETGAEITIEDDGTIYVGAADGPSAEAAIDKI. In terms of domain architecture, S1 motif spans 660–729; sequence GERFLGTVVK…SRGKISLVVV (70 aa).

This sequence belongs to the polyribonucleotide nucleotidyltransferase family. Mg(2+) serves as cofactor.

The protein localises to the cytoplasm. It carries out the reaction RNA(n+1) + phosphate = RNA(n) + a ribonucleoside 5'-diphosphate. Functionally, involved in mRNA degradation. Catalyzes the phosphorolysis of single-stranded polyribonucleotides processively in the 3'- to 5'-direction. The chain is Polyribonucleotide nucleotidyltransferase from Saccharopolyspora erythraea (strain ATCC 11635 / DSM 40517 / JCM 4748 / NBRC 13426 / NCIMB 8594 / NRRL 2338).